The chain runs to 867 residues: Elongation factor 2 (867 aa).

The region spanning 17 to 368 (HNIRNLSVVA…MIVLHLPSPV (352 aa)) is the tr-type G domain. 26-33 (AHVDHGKS) is a binding site for GTP. Threonine 57 and threonine 59 each carry phosphothreonine. Residues 176–179 (NKLD) and 231–233 (SGL) each bind GTP. Histidine 723 is subject to Diphthamide.

This sequence belongs to the TRAFAC class translation factor GTPase superfamily. Classic translation factor GTPase family. EF-G/EF-2 subfamily. Post-translationally, phosphorylation by EF-2 kinase completely inactivates EF-2.

The protein resides in the cytoplasm. It carries out the reaction GTP + H2O = GDP + phosphate + H(+). Functionally, catalyzes the GTP-dependent ribosomal translocation step during translation elongation. During this step, the ribosome changes from the pre-translocational (PRE) to the post-translocational (POST) state as the newly formed A-site-bound peptidyl-tRNA and P-site-bound deacylated tRNA move to the P and E sites, respectively. Catalyzes the coordinated movement of the two tRNA molecules, the mRNA and conformational changes in the ribosome. The chain is Elongation factor 2 from Blastocystis hominis.